We begin with the raw amino-acid sequence, 191 residues long: Putative zinc metalloprotease MJ0611 (191 aa).

The helical transmembrane segment at 20 to 40 (AIAFIFSYPNFSILVFIISLI) threads the bilayer. H49 is a binding site for Zn(2+). Residue E50 is part of the active site. Residue H53 coordinates Zn(2+). The next 4 helical transmembrane spans lie at 73-93 (LILG…PGAV), 110-130 (LAGP…MLIF), 133-153 (GSLL…LAGF), and 171-191 (PFIW…MMFW).

It belongs to the peptidase M50B family. The cofactor is Zn(2+).

Its subcellular location is the cell membrane. The chain is Putative zinc metalloprotease MJ0611 from Methanocaldococcus jannaschii (strain ATCC 43067 / DSM 2661 / JAL-1 / JCM 10045 / NBRC 100440) (Methanococcus jannaschii).